Reading from the N-terminus, the 320-residue chain is MPTNSIKLLAPDVHRGLAELVAKRLGLQLTSSKLKRDPTGEVSFSIGESVRDQDIFIITQIGSGVVNDRVLELLIMINASKTASARRITAIIPNFPYARQDRKDKSRAPITAKLMADMLTTAGCDHVITMDLHASQIQGFFDVPVDNLYAEPSVVRYIKENVNYMDSIIISPDAGGAKRAATLADRLDLNFALIHKERARANEVSRMVLVGDVTDKICIIVDDMADTCGTLAKAAEILLENRAKSVIAIVTHGVLSGRAIENINNSKLDRVVCTNTVPFEEKIKKCPKLAVIDISSVLAESIRRLHNGESISYLFKNYPL.

Asp131, His133, Asp142, and Asp146 together coordinate Mg(2+).

The protein belongs to the ribose-phosphate pyrophosphokinase family.

Its subcellular location is the cytoplasm. The enzyme catalyses D-ribose 5-phosphate + ATP = 5-phospho-alpha-D-ribose 1-diphosphate + AMP + H(+). Its pathway is metabolic intermediate biosynthesis; 5-phospho-alpha-D-ribose 1-diphosphate biosynthesis; 5-phospho-alpha-D-ribose 1-diphosphate from D-ribose 5-phosphate (route I): step 1/1. Its function is as follows. 5-phosphoribose 1-diphosphate synthase involved in nucleotide, histidine, and tryptophan biosynthesis. Active in heteromultimeric complexes with other 5-phosphoribose 1-diphosphate synthases (PRS2, PRS3, PRS4 and PRS5). This is Ribose-phosphate pyrophosphokinase 3 (PRS3) from Saccharomyces cerevisiae (strain ATCC 204508 / S288c) (Baker's yeast).